The primary structure comprises 327 residues: Ferredoxin--NADP reductase (327 aa).

FAD-binding residues include Thr-18, Asp-37, Gln-45, Tyr-50, Ala-90, Phe-124, Asp-283, and Ser-324.

It belongs to the ferredoxin--NADP reductase type 2 family. In terms of assembly, homodimer. Requires FAD as cofactor.

It catalyses the reaction 2 reduced [2Fe-2S]-[ferredoxin] + NADP(+) + H(+) = 2 oxidized [2Fe-2S]-[ferredoxin] + NADPH. The protein is Ferredoxin--NADP reductase of Saccharopolyspora erythraea (strain ATCC 11635 / DSM 40517 / JCM 4748 / NBRC 13426 / NCIMB 8594 / NRRL 2338).